The sequence spans 352 residues: RNA-binding protein lark (352 aa).

RRM domains are found at residues 7–77 and 86–156; these read FKLF…AAKS and TKIF…VSTS. The segment at 168–185 adopts a CCHC-type zinc-finger fold; that stretch reads EQCYRCGRSGHWSKECPR. 2 disordered regions span residues 187–228 and 254–352; these read YGSA…LRDR and YQTS…YAPY. Residues Ser-198 and Ser-201 each carry the phosphoserine modification. 2 stretches are compositionally biased toward pro residues: residues 214-224 and 262-277; these read PYPPPPPPPPF and FPPPPISRREPMPLPP. Polar residues predominate over residues 279–288; sequence LSGSLRSCSV. Phosphoserine occurs at positions 315 and 325. The segment covering 320 to 334 has biased composition (basic and acidic residues); it reads GYEDFSRDAFDERMI.

In terms of tissue distribution, expressed in the CNS and in CCAP neurons of the ventral nervous system (VNS), which control insect ecdysis.

It is found in the cytoplasm. It localises to the nucleus. Essential RNA-binding protein. May be required for circadian repression of eclosion. Also essential for nurse cell dumping during oogenesis, the process whereby the cytoplasmic contents of nurse cells are transferred to the oocyte late in it's development. The sequence is that of RNA-binding protein lark (lark) from Drosophila melanogaster (Fruit fly).